A 375-amino-acid chain; its full sequence is Queuine tRNA-ribosyltransferase (375 aa).

Residue Asp-89 is the Proton acceptor of the active site. Substrate is bound by residues 89-93 (DSGGF), Asp-143, Gln-187, and Gly-214. Residues 245-251 (GVGKPED) form an RNA binding region. Asp-264 acts as the Nucleophile in catalysis. Positions 269–273 (TRNAR) are RNA binding; important for wobble base 34 recognition. Residues Cys-302, Cys-304, Cys-307, and His-333 each contribute to the Zn(2+) site.

Belongs to the queuine tRNA-ribosyltransferase family. As to quaternary structure, homodimer. Within each dimer, one monomer is responsible for RNA recognition and catalysis, while the other monomer binds to the replacement base PreQ1. Requires Zn(2+) as cofactor.

It carries out the reaction 7-aminomethyl-7-carbaguanine + guanosine(34) in tRNA = 7-aminomethyl-7-carbaguanosine(34) in tRNA + guanine. Its pathway is tRNA modification; tRNA-queuosine biosynthesis. In terms of biological role, catalyzes the base-exchange of a guanine (G) residue with the queuine precursor 7-aminomethyl-7-deazaguanine (PreQ1) at position 34 (anticodon wobble position) in tRNAs with GU(N) anticodons (tRNA-Asp, -Asn, -His and -Tyr). Catalysis occurs through a double-displacement mechanism. The nucleophile active site attacks the C1' of nucleotide 34 to detach the guanine base from the RNA, forming a covalent enzyme-RNA intermediate. The proton acceptor active site deprotonates the incoming PreQ1, allowing a nucleophilic attack on the C1' of the ribose to form the product. After dissociation, two additional enzymatic reactions on the tRNA convert PreQ1 to queuine (Q), resulting in the hypermodified nucleoside queuosine (7-(((4,5-cis-dihydroxy-2-cyclopenten-1-yl)amino)methyl)-7-deazaguanosine). This Salmonella paratyphi A (strain ATCC 9150 / SARB42) protein is Queuine tRNA-ribosyltransferase.